The sequence spans 534 residues: 26S proteasome non-ATPase regulatory subunit 3 (534 aa).

Residues 1 to 16 (MKQEGSARRRGADKAK) are compositionally biased toward basic and acidic residues. Positions 1 to 68 (MKQEGSARRR…AAEHSQRELD (68 aa)) are disordered. Residues 17 to 32 (PPPGGGEQEPPPPPAP) show a composition bias toward pro residues. Lysine 38 is covalently cross-linked (Glycyl lysine isopeptide (Lys-Gly) (interchain with G-Cter in SUMO1); alternate). Residue lysine 38 forms a Glycyl lysine isopeptide (Lys-Gly) (interchain with G-Cter in SUMO2); alternate linkage. A compositionally biased stretch (low complexity) spans 49-61 (GETAGKTAAAAAE). A PCI domain is found at 286 to 465 (ARYLYYTGRI…GYVQSKEMID (180 aa)). 2 positions are modified to phosphoserine: serine 418 and serine 430. The segment at 500–534 (SYNKDLESAEERREREQQDLEFAKEMAEDDDDSFP) is disordered. The span at 501–525 (YNKDLESAEERREREQQDLEFAKEM) shows a compositional bias: basic and acidic residues.

Belongs to the proteasome subunit S3 family. Component of the 19S proteasome regulatory particle complex. The 26S proteasome consists of a 20S core particle (CP) and two 19S regulatory subunits (RP). The regulatory particle is made of a lid composed of 9 subunits including PSMD3, a base containing 6 ATPases and few additional components. Interacts with UBQLN1 (via ubiquitin-like domain). Interacts with ERCC6.

Its function is as follows. Component of the 26S proteasome, a multiprotein complex involved in the ATP-dependent degradation of ubiquitinated proteins. This complex plays a key role in the maintenance of protein homeostasis by removing misfolded or damaged proteins, which could impair cellular functions, and by removing proteins whose functions are no longer required. Therefore, the proteasome participates in numerous cellular processes, including cell cycle progression, apoptosis, or DNA damage repair. This is 26S proteasome non-ATPase regulatory subunit 3 (PSMD3) from Bos taurus (Bovine).